The following is a 175-amino-acid chain: Apoptosis regulator Bcl-2 homolog (175 aa).

A helical membrane pass occupies residues 152 to 174 (YYVTRYFRVAAFIITSLAVINLF).

As to quaternary structure, interacts with host BAK1 and BAX as well as other BH3-containing proteins including BIM, BID or PUMA.

It localises to the host membrane. Its function is as follows. Plays a role in the inhibition of host apoptosis. Interacts with host proapoptotic factors BAK1 and BAX to supposedly prevent their activation. This is Apoptosis regulator Bcl-2 homolog (CNPV058) from Canarypox virus (CNPV).